A 925-amino-acid chain; its full sequence is Probable glycoprotein hormone G-protein coupled receptor (925 aa).

Residues 1 to 27 (MEDRGICPRVLQVLFLVVLILISPVYA) form the signal peptide. At 28-529 (AKNDACTKCS…EDIMGYVWLT (502 aa)) the chain is on the extracellular side. A glycan (N-linked (GlcNAc...) asparagine) is linked at asparagine 61. LRR repeat units lie at residues 85–106 (KLKYLTLNNNKIKNIAKFRVKN), 110–131 (SLITLSYTHNIIETIENGAFDD), 134–155 (QLTQLDLSNNRLKEFPIFNKTS), 156–180 (SVTKLYLRGNPGITKLPRQSLGNLP), 181–202 (SLENLFMERTGIQEIPAGIFRQ), 203–224 (NTRLINLYFNKTKALERINEDA), 230–250 (SLKTLVLDETSVTSLPSRGLK), and 251–273 (NLHFLSLKDVPNFWQLPELDSIR). N-linked (GlcNAc...) asparagine glycosylation occurs at asparagine 152. The N-linked (GlcNAc...) asparagine glycan is linked to asparagine 212. Residues 299 to 493 (TMQKPSTEEN…PTLIPHSNHT (195 aa)) are disordered. Positions 301 to 318 (QKPSTEENNGQTTASSPT) are enriched in polar residues. The stretch at 333–349 (STQPHTTSGFGGGGFPG) is one 1; truncated repeat. The segment at 333–461 (STQPHTTSGF…PGGGGFPGGG (129 aa)) is 5 X approximate tandem repeats. A compositionally biased stretch (gly residues) spans 341–362 (GFGGGGFPGGGGGFPGGGGFPA). A run of 3 repeats spans residues 350-384 (GGGGFPGGGGFPAGGSKTSTQPHTTSGFGGGGFPG), 385-419 (GGGGFPGGGGFPAGGSKTSTQPHTTSGFGGGGFPG), and 420-453 (GGGGFPGGGGFPGGSNTSTQPHTTSNSGGGGFPG). The segment covering 365 to 375 (SKTSTQPHTTS) has biased composition (polar residues). Residues 376–397 (GFGGGGFPGGGGGFPGGGGFPA) are compositionally biased toward gly residues. The span at 400–410 (SKTSTQPHTTS) shows a compositional bias: polar residues. Positions 411 to 432 (GFGGGGFPGGGGGFPGGGGFPG) are enriched in gly residues. A compositionally biased stretch (polar residues) spans 434–445 (SNTSTQPHTTSN). An N-linked (GlcNAc...) asparagine glycan is attached at asparagine 435. The segment covering 446–462 (SGGGGFPGGGGFPGGGT) has biased composition (gly residues). The 5; truncated repeat unit spans residues 454–461 (GGGFPGGG). Polar residues predominate over residues 476–493 (VHQSTADPPTLIPHSNHT). N-linked (GlcNAc...) asparagine glycosylation is present at asparagine 495. A helical membrane pass occupies residues 530–551 (VVSFMVGAVALVANLVVALVLL). The Cytoplasmic portion of the chain corresponds to 552–561 (TSQRRLNVTR). Residues 562–584 (FLMCNLAFADFILGLYIFILTSV) form a helical membrane-spanning segment. Over 585 to 606 (SAVTRGDYHNYVQQWQNGAGCK) the chain is Extracellular. A helical transmembrane segment spans residues 607 to 628 (ILGFLAVFSSELSLFTLVMMTI). Topologically, residues 629–651 (ERFYAIVHAMHMNARLSFRKTVR) are cytoplasmic. Residues 652 to 673 (FMIGGWIFALVMAVVPLTGVSG) form a helical membrane-spanning segment. Topologically, residues 674–691 (YSKVAICLPFDVSDATST) are extracellular. The chain crosses the membrane as a helical span at residues 692-712 (AYVAFLLLVNGASFISVMYLY). The Cytoplasmic segment spans residues 713–739 (SRMLYVVVSGGDMEGAPKRNDSKVAKR). The helical transmembrane segment at 740-763 (MAILVFTDMLCWAPIAFFGLLAAF) threads the bilayer. Residues 764–774 (GQTLLTVTQSK) lie on the Extracellular side of the membrane. The helical transmembrane segment at 775–795 (ILLVFFFPINSICNPFLYAFF) threads the bilayer. Over 796–925 (TKAFKRELFT…QKQKILQSPS (130 aa)) the chain is Cytoplasmic. The tract at residues 904–925 (VTKSSSPPHLKLQKQKILQSPS) is disordered.

This sequence belongs to the G-protein coupled receptor 1 family. FSH/LSH/TSH subfamily.

Its subcellular location is the cell membrane. Its function is as follows. Probable receptor for a glycoprotein hormone. In Anthopleura elegantissima (Green aggregating anemone), this protein is Probable glycoprotein hormone G-protein coupled receptor.